The chain runs to 444 residues: Phosphoglucosamine mutase (444 aa).

S103 (phosphoserine intermediate) is an active-site residue. 4 residues coordinate Mg(2+): S103, D241, D243, and D245. At S103 the chain carries Phosphoserine.

The protein belongs to the phosphohexose mutase family. The cofactor is Mg(2+). Activated by phosphorylation.

The catalysed reaction is alpha-D-glucosamine 1-phosphate = D-glucosamine 6-phosphate. Catalyzes the conversion of glucosamine-6-phosphate to glucosamine-1-phosphate. The protein is Phosphoglucosamine mutase of Deinococcus geothermalis (strain DSM 11300 / CIP 105573 / AG-3a).